Consider the following 128-residue polypeptide: UPF0325 protein YaeH (128 aa).

It belongs to the UPF0325 family.

The polypeptide is UPF0325 protein YaeH (Escherichia coli (strain ATCC 8739 / DSM 1576 / NBRC 3972 / NCIMB 8545 / WDCM 00012 / Crooks)).